The sequence spans 282 residues: Bifunctional protein FolD (282 aa).

NADP(+)-binding positions include 165-167 (GAS) and I231.

This sequence belongs to the tetrahydrofolate dehydrogenase/cyclohydrolase family. In terms of assembly, homodimer.

The enzyme catalyses (6R)-5,10-methylene-5,6,7,8-tetrahydrofolate + NADP(+) = (6R)-5,10-methenyltetrahydrofolate + NADPH. The catalysed reaction is (6R)-5,10-methenyltetrahydrofolate + H2O = (6R)-10-formyltetrahydrofolate + H(+). The protein operates within one-carbon metabolism; tetrahydrofolate interconversion. Functionally, catalyzes the oxidation of 5,10-methylenetetrahydrofolate to 5,10-methenyltetrahydrofolate and then the hydrolysis of 5,10-methenyltetrahydrofolate to 10-formyltetrahydrofolate. The protein is Bifunctional protein FolD of Francisella tularensis subsp. holarctica (strain FTNF002-00 / FTA).